Here is a 526-residue protein sequence, read N- to C-terminus: MESPEDRNGNDVRQPLLEKIPVKKEAEGEERLCIDEMLQRYCGEFGRWQLKHFVLTCIAWALEAFHTMVMIFADQEPEWRCVGSDCRVGSLNCELDPSSWEWTAGKGSSTVSEWGLICGDKYKVGLVQALFFAGCMIGAGVFGHLSDSKLGRKGSLTVVCIINAIFGIATAFSPNYWTYVVLRFLTGFSTGGVGLTAFVLATEPIGPSKRGVAGMSTFYFFSAGIAVLSGIAYVFRSWRELFIVSSLPSLLFLLIVIPFISESPRWYLVRGKVDEAMKLMHSIAKTNGRHIPAGVTLALDDDVENNNGERNTAVEGSLKDVILSPLMRMRLVISVAISFTVSIVYYGLSLNVGNLKTNLYLNVFVNAVSEMPAFAITAVLLDKYGRKPLSIGTQWFSCVFCLVGFSVWGAGPWKSVRMVSGVLGIFGMAGTYNLLFIYIAELFPTVVRNAALGCATQAAQMGAILAPFVVVLGEELPFGVFAVCGLVGGGLAFYLPETLNKPLYDTMFGMHEAESESNRERGEVIC.

Over 1–52 the chain is Cytoplasmic; it reads MESPEDRNGNDVRQPLLEKIPVKKEAEGEERLCIDEMLQRYCGEFGRWQLKH. The helical transmembrane segment at 53-73 threads the bilayer; the sequence is FVLTCIAWALEAFHTMVMIFA. Residues 74–123 lie on the Extracellular side of the membrane; that stretch reads DQEPEWRCVGSDCRVGSLNCELDPSSWEWTAGKGSSTVSEWGLICGDKYK. The helical transmembrane segment at 124–144 threads the bilayer; sequence VGLVQALFFAGCMIGAGVFGH. Over 145–153 the chain is Cytoplasmic; that stretch reads LSDSKLGRK. Residues 154–174 traverse the membrane as a helical segment; that stretch reads GSLTVVCIINAIFGIATAFSP. Topologically, residues 175–179 are extracellular; the sequence is NYWTY. Residues 180–200 form a helical membrane-spanning segment; it reads VVLRFLTGFSTGGVGLTAFVL. Residue 201–208 participates in ATP binding; that stretch reads ATEPIGPS. Topologically, residues 201 to 214 are cytoplasmic; the sequence is ATEPIGPSKRGVAG. A helical transmembrane segment spans residues 215-235; that stretch reads MSTFYFFSAGIAVLSGIAYVF. Residues 236 to 240 are Extracellular-facing; the sequence is RSWRE. Residues 241 to 261 traverse the membrane as a helical segment; that stretch reads LFIVSSLPSLLFLLIVIPFIS. Residues 262–331 lie on the Cytoplasmic side of the membrane; the sequence is ESPRWYLVRG…ILSPLMRMRL (70 aa). A helical transmembrane segment spans residues 332–352; sequence VISVAISFTVSIVYYGLSLNV. Residues 353–360 lie on the Extracellular side of the membrane; that stretch reads GNLKTNLY. The helical transmembrane segment at 361–381 threads the bilayer; it reads LNVFVNAVSEMPAFAITAVLL. At 382–390 the chain is on the cytoplasmic side; that stretch reads DKYGRKPLS. The chain crosses the membrane as a helical span at residues 391–411; sequence IGTQWFSCVFCLVGFSVWGAG. At 412 to 418 the chain is on the extracellular side; sequence PWKSVRM. Residues 419 to 439 form a helical membrane-spanning segment; sequence VSGVLGIFGMAGTYNLLFIYI. Topologically, residues 440 to 451 are cytoplasmic; that stretch reads AELFPTVVRNAA. The helical transmembrane segment at 452–472 threads the bilayer; the sequence is LGCATQAAQMGAILAPFVVVL. Residues 473-475 are Extracellular-facing; it reads GEE. The helical transmembrane segment at 476-496 threads the bilayer; sequence LPFGVFAVCGLVGGGLAFYLP. Residues 497 to 526 are Cytoplasmic-facing; sequence ETLNKPLYDTMFGMHEAESESNRERGEVIC.

The protein belongs to the major facilitator (TC 2.A.1) superfamily. Organic cation transporter (TC 2.A.1.19) family. Mostly expressed in siliques, and, to a lower extent, in stems, leaves, flowers and siliques. Present in pollen. In the stems of secondary inflorescences present in the phloem cells and xylem parenchyma cells.

The protein resides in the vacuole membrane. Its function is as follows. High affinity carnitine transporter involved in the active cellular uptake of carnitine. Also transports organic cations. The sequence is that of Organic cation/carnitine transporter 4 (OCT4) from Arabidopsis thaliana (Mouse-ear cress).